The sequence spans 190 residues: Tereporin-Ca1 (190 aa).

An N-terminal region region spans residues 2–21 (TAGSSLAGTTLSGLAASGYR). 5 residues coordinate phosphocholine: Gly78, Ser96, Pro98, Tyr131, and Tyr132. The Cell attachment site, crucial for protein stability motif lies at 138–140 (KGE).

This sequence belongs to the actinoporin family. Conoidea subfamily. In terms of assembly, octamer or nonamer in membranes. Monomer in the soluble state. Expressed by the venom duct.

It localises to the secreted. It is found in the nematocyst. Its subcellular location is the target cell membrane. Functionally, pore-forming protein that forms pores of around 1 nm and causes cardiac stimulation and cytolysis. This chain is Tereporin-Ca1, found in Terebra anilis (Auger snail).